The primary structure comprises 752 residues: Ribosomal protein S6 kinase 2 alpha (752 aa).

The Protein kinase 1 domain maps to 80–339; sequence FELLKVLGQG…AEEIKRHPFY (260 aa). ATP-binding positions include 86-94 and Lys112; that span reads LGQGSFGKV. Asp205 serves as the catalytic Proton acceptor. Ser239 carries the phosphoserine modification. Residues 340–409 form the AGC-kinase C-terminal domain; it reads STIDWNKLYR…VATGLMEDSK (70 aa). A Phosphothreonine modification is found at Thr377. A Phosphoserine modification is found at Ser381. Ser398 is subject to Phosphoserine; by autocatalysis. Residues 435 to 692 form the Protein kinase 2 domain; it reads YVVKEAIGVG…AKQVLQHPWI (258 aa). Residues 441–449 and Lys464 each bind ATP; that span reads IGVGSYSVC. Catalysis depends on Asp552, which acts as the Proton acceptor. Thr590 is subject to Phosphothreonine. Phosphoserine is present on Ser749.

Belongs to the protein kinase superfamily. AGC Ser/Thr protein kinase family. S6 kinase subfamily. Mg(2+) is required as a cofactor. Post-translationally, autophosphorylated on Ser-398, as part of the activation process. In terms of tissue distribution, small and large intestine, spleen, stomach, and bursa, and to a lesser extent lung and kidney.

It carries out the reaction L-seryl-[protein] + ATP = O-phospho-L-seryl-[protein] + ADP + H(+). The catalysed reaction is L-threonyl-[protein] + ATP = O-phospho-L-threonyl-[protein] + ADP + H(+). With respect to regulation, activated by multiple phosphorylations on threonine and serine residues. Its function is as follows. Serine/threonine kinase that may play a role in mediating the growth-factor and stress induced activation of transcription. This is Ribosomal protein S6 kinase 2 alpha (RPS6KA) from Gallus gallus (Chicken).